Here is a 151-residue protein sequence, read N- to C-terminus: Protein SprT-like (151 aa).

Residues Leu6 to Lys148 enclose the SprT-like domain. His67 provides a ligand contact to Zn(2+). The active site involves Glu68. Residue His71 coordinates Zn(2+).

It belongs to the SprT family. It depends on Zn(2+) as a cofactor.

It localises to the cytoplasm. This is Protein SprT-like from Anoxybacillus flavithermus (strain DSM 21510 / WK1).